The following is a 180-amino-acid chain: Minor allergen Can f 2 (180 aa).

Residues 1–18 (MQLLLLTVGLALICGLQA) form the signal peptide. Asparagine 45 carries N-linked (GlcNAc...) asparagine glycosylation. Cysteine 82 and cysteine 175 are oxidised to a cystine.

It belongs to the calycin superfamily. Lipocalin family. As to expression, tongue epithelial tissue and parotid gland.

The protein resides in the secreted. The sequence is that of Minor allergen Can f 2 from Canis lupus familiaris (Dog).